A 1194-amino-acid chain; its full sequence is Cohesin subunit SA-2 (1194 aa).

An SCD domain is found at 224 to 309 (FVHRYRDAIA…SRFKDRIVSM (86 aa)). A disordered region spans residues 986–1027 (DTMSVMSGMSGRGSSTRSKKIKPPTGKRKLPEAEESSSSDSM). Residues 988–1001 (MSVMSGMSGRGSST) are compositionally biased toward low complexity. Residues 1002-1013 (RSKKIKPPTGKR) are compositionally biased toward basic residues.

It belongs to the SCC3 family. Part of the cohesin complex which is composed of a heterodimer between a SMC1 protein (SMC1A or SMC1B) and SMC3, which are attached via their hinge domain, and RAD21 which link them at their heads, and one STAG protein (STAG1, STAG2 or STAG3). In cohesin complexes, STAG2 is mutually exclusive with STAG1 and STAG3. Interacts directly with RAD21 in cohesin complex. In terms of processing, phosphorylated by PLK1. The large dissociation of cohesin from chromosome arms during prophase is partly due to its phosphorylation.

The protein localises to the nucleus. It localises to the chromosome. Its subcellular location is the centromere. In terms of biological role, component of cohesin complex, a complex required for the cohesion of sister chromatids after DNA replication. The cohesin complex apparently forms a large proteinaceous ring within which sister chromatids can be trapped. At anaphase, the complex is cleaved and dissociates from chromatin, allowing sister chromatids to segregate. The cohesin complex may also play a role in spindle pole assembly during mitosis. This is Cohesin subunit SA-2 (stag2) from Xenopus laevis (African clawed frog).